The following is a 364-amino-acid chain: Transcription factor IIIA (364 aa).

C2H2-type zinc fingers lie at residues 38 to 62, 68 to 92, 98 to 123, 130 to 154, 160 to 184, 187 to 211, 215 to 237, 244 to 269, and 275 to 299; these read FICS…LCKH, FVCD…VLIH, FVCA…ERKH, YVCS…QCQH, FRCT…GKVH, YLCQ…REAH, ITCN…MKTH, YRCP…LSFH, and FVCE…SVVH. Positions 299–364 are disordered; it reads HDPDKKRMKL…PPPAALLTVC (66 aa). The span at 338-352 shows a compositional bias: low complexity; it reads SLPNASAESSSSPEA.

It is found in the nucleus. Involved in ribosomal large subunit biogenesis. Binds the approximately 50 base pairs internal control region (ICR) of 5S ribosomal RNA genes. It is required for their RNA polymerase III-dependent transcription and may also maintain the transcription of other genes. Also binds the transcribed 5S RNA's. The polypeptide is Transcription factor IIIA (Gtf3a) (Mus musculus (Mouse)).